Here is a 151-residue protein sequence, read N- to C-terminus: Phosphopantetheine adenylyltransferase (151 aa).

Substrate is bound at residue Thr9. Residues 9–10 (TF) and His17 each bind ATP. The substrate site is built by Lys41, Thr73, and Arg87. Residues 88-90 (GIR), Glu98, and 122-128 (LTCVSST) each bind ATP.

This sequence belongs to the bacterial CoaD family. As to quaternary structure, homohexamer. It depends on Mg(2+) as a cofactor.

The protein localises to the cytoplasm. The catalysed reaction is (R)-4'-phosphopantetheine + ATP + H(+) = 3'-dephospho-CoA + diphosphate. Its pathway is cofactor biosynthesis; coenzyme A biosynthesis; CoA from (R)-pantothenate: step 4/5. Reversibly transfers an adenylyl group from ATP to 4'-phosphopantetheine, yielding dephospho-CoA (dPCoA) and pyrophosphate. The protein is Phosphopantetheine adenylyltransferase of Bacteroides thetaiotaomicron (strain ATCC 29148 / DSM 2079 / JCM 5827 / CCUG 10774 / NCTC 10582 / VPI-5482 / E50).